A 469-amino-acid chain; its full sequence is Glutamine synthetase (469 aa).

One can recognise a GS beta-grasp domain in the interval 15-96 (EDVKFIDVRF…INFFIHDPIT (82 aa)). The GS catalytic domain maps to 104–469 (PRNVAKKAEA…PYEYEQYYDV (366 aa)). Mg(2+) is bound by residues Glu129 and Glu131. Residue Glu205 participates in ATP binding. 2 residues coordinate Mg(2+): Glu210 and Glu218. Residue 221 to 223 (YKF) coordinates ATP. L-glutamate is bound by residues 262–263 (NG) and Gly263. Position 267 (His267) interacts with Mg(2+). ATP is bound by residues 269–271 (HQS) and Ser271. The L-glutamate site is built by Arg320, Glu326, and Arg338. Residues Arg338, Arg343, and Lys352 each contribute to the ATP site. Mg(2+) is bound at residue Glu357. Arg359 is a binding site for L-glutamate. Tyr397 carries the O-AMP-tyrosine modification.

The protein belongs to the glutamine synthetase family. Oligomer of 12 subunits arranged in the form of two hexagons. It depends on Mg(2+) as a cofactor.

The protein localises to the cytoplasm. The enzyme catalyses L-glutamate + NH4(+) + ATP = L-glutamine + ADP + phosphate + H(+). Its activity is regulated as follows. The activity of this enzyme could be controlled by adenylation under conditions of abundant glutamine. Its function is as follows. Catalyzes the ATP-dependent biosynthesis of glutamine from glutamate and ammonia. The polypeptide is Glutamine synthetase (Streptomyces viridochromogenes).